Here is a 191-residue protein sequence, read N- to C-terminus: Thymidylate kinase (191 aa).

7–14 (GVDGVGKS) serves as a coordination point for ATP.

It belongs to the thymidylate kinase family.

The enzyme catalyses dTMP + ATP = dTDP + ADP. Its function is as follows. Phosphorylation of dTMP to form dTDP in both de novo and salvage pathways of dTTP synthesis. In Helicobacter pylori (strain HPAG1), this protein is Thymidylate kinase.